The chain runs to 320 residues: GPI-specific phospholipase A2-like PGAP3 (320 aa).

Residues 1-20 (MAGLAARLVLLAGAAALASG) form the signal peptide. The Lumenal segment spans residues 21–98 (SQGDREPVYR…QFHGKWPFSR (78 aa)). N40 carries N-linked (GlcNAc...) asparagine glycosylation. Residues 99-119 (FLFFQEPASAVASFLNGLASL) traverse the membrane as a helical segment. The Cytoplasmic portion of the chain corresponds to 120–135 (VMLCRYRTFVPASSPM). The chain crosses the membrane as a helical span at residues 136 to 156 (YHTCVAFAWVSLNAWFWSTVF). At 157–169 (HTRDTDLTEKMDY) the chain is on the lumenal side. A helical transmembrane segment spans residues 170–190 (FCASTVILHSIYLCCVRTVGL). Residues 191-193 (QHP) lie on the Cytoplasmic side of the membrane. A helical transmembrane segment spans residues 194 to 214 (AVVSAFRALLLLMLTVHVSYL). The Lumenal segment spans residues 215-224 (SLIRFDYGYN). The helical transmembrane segment at 225 to 245 (LVANVAIGLVNVVWWLAWCLW) threads the bilayer. Over 246–257 (NQRRLPHVRKCV) the chain is Cytoplasmic. A helical transmembrane segment spans residues 258–278 (VVVLLLQGLSLLELLDFPPLF). Residue W279 is a topological domain, lumenal. Residues 280–299 (VLDAHAIWHISTIPVHVLFF) traverse the membrane as a helical segment. Topologically, residues 300 to 320 (SFLEDDSLYLLKESEDKFKLD) are cytoplasmic.

The protein belongs to the PGAP3 family. As to expression, ubiquitously expressed, with highest levels in thyroid and placenta.

The protein localises to the golgi apparatus membrane. Its function is as follows. Involved in the fatty acid remodeling steps of GPI-anchor maturation where the unsaturated acyl chain at sn-2 of inositol phosphate is replaced by a saturated stearoyl chain. May catalyze the first step of the fatty acid remodeling, by removing the unsaturated acyl chain at sn-2 of inositol phosphate, generating a lyso-GPI intermediate. The fatty acid remodeling steps is critical for the integration of GPI-APs into lipid rafts. The chain is GPI-specific phospholipase A2-like PGAP3 from Homo sapiens (Human).